An 876-amino-acid chain; its full sequence is Alanine--tRNA ligase (876 aa).

Residues histidine 568, histidine 572, cysteine 670, and histidine 674 each contribute to the Zn(2+) site.

Belongs to the class-II aminoacyl-tRNA synthetase family. Requires Zn(2+) as cofactor.

It localises to the cytoplasm. The catalysed reaction is tRNA(Ala) + L-alanine + ATP = L-alanyl-tRNA(Ala) + AMP + diphosphate. Its function is as follows. Catalyzes the attachment of alanine to tRNA(Ala) in a two-step reaction: alanine is first activated by ATP to form Ala-AMP and then transferred to the acceptor end of tRNA(Ala). Also edits incorrectly charged Ser-tRNA(Ala) and Gly-tRNA(Ala) via its editing domain. In Anaplasma phagocytophilum (strain HZ), this protein is Alanine--tRNA ligase.